Reading from the N-terminus, the 750-residue chain is Olfactomedin-like protein 2B (750 aa).

An N-terminal signal peptide occupies residues 1–22; it reads MAKPRLLVLYFALIVVPAWVSS. Coiled coils occupy residues 40 to 68 and 179 to 213; these read AEDE…KVKA and KLEE…GKEN. N-linked (GlcNAc...) asparagine glycosylation is found at Asn187 and Asn213. Disordered regions lie at residues 346-437 and 452-484; these read TRRP…PPAV and VPPT…PEEE. Composition is skewed to polar residues over residues 354–384 and 393–413; these read QGHS…SDPS and PTLQ…LQPS. Positions 416–430 are enriched in low complexity; the sequence is VPATTVAHTATQQPA. The region spanning 493 to 750 is the Olfactomedin-like domain; the sequence is RCKDTLSTIT…QVTYHVIFAY (258 aa). Residues Cys494 and Cys680 are joined by a disulfide bond. N-linked (GlcNAc...) asparagine glycosylation occurs at Asn695.

Homodimer. Binds to heparin and chondroitin sulfate E. Post-translationally, O-glycosylated and N-glycosylated.

It is found in the secreted. In Homo sapiens (Human), this protein is Olfactomedin-like protein 2B (OLFML2B).